A 248-amino-acid chain; its full sequence is UDP-2,3-diacylglucosamine hydrolase (248 aa).

Mn(2+) contacts are provided by Asp-8, His-10, Asp-41, Asn-79, and His-114. 79-80 (NR) provides a ligand contact to substrate. Residues Asp-122, Ser-160, Asp-171, and His-202 each coordinate substrate. 2 residues coordinate Mn(2+): His-202 and His-204.

This sequence belongs to the LpxH family. Requires Mn(2+) as cofactor.

The protein localises to the cell inner membrane. The catalysed reaction is UDP-2-N,3-O-bis[(3R)-3-hydroxytetradecanoyl]-alpha-D-glucosamine + H2O = 2-N,3-O-bis[(3R)-3-hydroxytetradecanoyl]-alpha-D-glucosaminyl 1-phosphate + UMP + 2 H(+). The protein operates within glycolipid biosynthesis; lipid IV(A) biosynthesis; lipid IV(A) from (3R)-3-hydroxytetradecanoyl-[acyl-carrier-protein] and UDP-N-acetyl-alpha-D-glucosamine: step 4/6. Functionally, hydrolyzes the pyrophosphate bond of UDP-2,3-diacylglucosamine to yield 2,3-diacylglucosamine 1-phosphate (lipid X) and UMP by catalyzing the attack of water at the alpha-P atom. Involved in the biosynthesis of lipid A, a phosphorylated glycolipid that anchors the lipopolysaccharide to the outer membrane of the cell. The chain is UDP-2,3-diacylglucosamine hydrolase from Stenotrophomonas maltophilia (strain R551-3).